Here is a 359-residue protein sequence, read N- to C-terminus: 3-isopropylmalate dehydrogenase (359 aa).

G74–E85 is a binding site for NAD(+). R92, R102, R131, and D220 together coordinate substrate. Residues D220, D245, and D249 each coordinate Mg(2+). G284–N295 provides a ligand contact to NAD(+).

The protein belongs to the isocitrate and isopropylmalate dehydrogenases family. As to quaternary structure, homodimer. Mg(2+) is required as a cofactor. Requires Mn(2+) as cofactor.

It is found in the cytoplasm. The enzyme catalyses (2R,3S)-3-isopropylmalate + NAD(+) = 4-methyl-2-oxopentanoate + CO2 + NADH. Its pathway is amino-acid biosynthesis; L-leucine biosynthesis; L-leucine from 3-methyl-2-oxobutanoate: step 3/4. In terms of biological role, catalyzes the oxidation of 3-carboxy-2-hydroxy-4-methylpentanoate (3-isopropylmalate) to 3-carboxy-4-methyl-2-oxopentanoate. The product decarboxylates to 4-methyl-2 oxopentanoate. In Kluyveromyces marxianus (Yeast), this protein is 3-isopropylmalate dehydrogenase (LEU2).